The following is a 287-amino-acid chain: Succinate--CoA ligase [ADP-forming] subunit alpha 2 (287 aa).

Residues 17–20 (TGYQ), Lys-43, and 96–98 (ITE) each bind CoA. A substrate-binding site is contributed by Tyr-159. The Tele-phosphohistidine intermediate role is filled by His-246.

The protein belongs to the succinate/malate CoA ligase alpha subunit family. In terms of assembly, heterotetramer of two alpha and two beta subunits.

It catalyses the reaction succinate + ATP + CoA = succinyl-CoA + ADP + phosphate. The enzyme catalyses GTP + succinate + CoA = succinyl-CoA + GDP + phosphate. The protein operates within carbohydrate metabolism; tricarboxylic acid cycle; succinate from succinyl-CoA (ligase route): step 1/1. Its function is as follows. Succinyl-CoA synthetase functions in the citric acid cycle (TCA), coupling the hydrolysis of succinyl-CoA to the synthesis of either ATP or GTP and thus represents the only step of substrate-level phosphorylation in the TCA. The alpha subunit of the enzyme binds the substrates coenzyme A and phosphate, while succinate binding and nucleotide specificity is provided by the beta subunit. This is Succinate--CoA ligase [ADP-forming] subunit alpha 2 from Archaeoglobus fulgidus (strain ATCC 49558 / DSM 4304 / JCM 9628 / NBRC 100126 / VC-16).